A 417-amino-acid chain; its full sequence is UPF0754 membrane protein PCC8801_0398 (417 aa).

The next 2 membrane-spanning stretches (helical) occupy residues 11–31 and 395–415; these read FSLLWTIALPPIAGTIIGYFT and IVNIGGVLGFLVGVFQSILLI.

It belongs to the UPF0754 family.

It is found in the cell inner membrane. This Rippkaea orientalis (strain PCC 8801 / RF-1) (Cyanothece sp. (strain PCC 8801)) protein is UPF0754 membrane protein PCC8801_0398.